The primary structure comprises 213 residues: NADH dehydrogenase [ubiquinone] iron-sulfur protein 7, mitochondrial (213 aa).

The N-terminal 38 residues, 1–38 (MAVLSAPGLRGFRILGLRSSVGPAVQARGVHQSVATDG), are a transit peptide targeting the mitochondrion. Residues 31-53 (HQSVATDGPSSTQPALPKARAVA) form a disordered region. Residues 33 to 44 (SVATDGPSSTQP) show a composition bias toward polar residues. Positions 88 and 89 each coordinate [4Fe-4S] cluster. R111 bears the Hydroxyarginine mark. 2 residues coordinate [4Fe-4S] cluster: C153 and C183.

This sequence belongs to the complex I 20 kDa subunit family. In terms of assembly, core subunit of respiratory chain NADH dehydrogenase (Complex I) which is composed of 45 different subunits. This is a component of the iron-sulfur (IP) fragment of the enzyme. It depends on [4Fe-4S] cluster as a cofactor. In terms of processing, hydroxylated at Arg-111 by NDUFAF5 early in the pathway of assembly of complex I, before the formation of the juncture between peripheral and membrane arms.

Its subcellular location is the mitochondrion inner membrane. It carries out the reaction a ubiquinone + NADH + 5 H(+)(in) = a ubiquinol + NAD(+) + 4 H(+)(out). Functionally, core subunit of the mitochondrial membrane respiratory chain NADH dehydrogenase (Complex I) which catalyzes electron transfer from NADH through the respiratory chain, using ubiquinone as an electron acceptor. Essential for the catalytic activity of complex I. This chain is NADH dehydrogenase [ubiquinone] iron-sulfur protein 7, mitochondrial (NDUFS7), found in Homo sapiens (Human).